We begin with the raw amino-acid sequence, 449 residues long: Tubulin beta chain (449 aa).

Gln-11, Glu-69, Ser-138, Gly-142, Thr-143, Gly-144, Asn-204, and Asn-226 together coordinate GTP. Glu-69 is a binding site for Mg(2+). A disordered region spans residues Gln-426–Ala-449. The segment covering Thr-429–Ala-449 has biased composition (acidic residues).

It belongs to the tubulin family. Dimer of alpha and beta chains. A typical microtubule is a hollow water-filled tube with an outer diameter of 25 nm and an inner diameter of 15 nM. Alpha-beta heterodimers associate head-to-tail to form protofilaments running lengthwise along the microtubule wall with the beta-tubulin subunit facing the microtubule plus end conferring a structural polarity. Microtubules usually have 13 protofilaments but different protofilament numbers can be found in some organisms and specialized cells. Requires Mg(2+) as cofactor.

It localises to the cytoplasm. It is found in the cytoskeleton. In terms of biological role, tubulin is the major constituent of microtubules, a cylinder consisting of laterally associated linear protofilaments composed of alpha- and beta-tubulin heterodimers. Microtubules grow by the addition of GTP-tubulin dimers to the microtubule end, where a stabilizing cap forms. Below the cap, tubulin dimers are in GDP-bound state, owing to GTPase activity of alpha-tubulin. The protein is Tubulin beta chain of Toxoplasma gondii.